The primary structure comprises 524 residues: MAETQRPVLVVDFGAQYAQLIARRVREASVYSEVVPHTATVEEIAAKKPLAVILSGGPASVYAEGAPQLDPRLFDLNLPVFGICYGFQAMAQALGGTVAHTGTREYGRTELNIDGGVLHGGLPTIQPVWMSHGDAVTDAPEGFEVTGTTAGAPVAAFEDRARRLAGVQYHPEVLHSPHGQQVLSRFLHELAGIPASWTPSNIADVLVEQVRAQVGDGHAICGLSGGVDSAVAAALVQRAIGDRLTCVFVDHGLLRAGEREQVQQDFVASTGAKLVTVDAVDKFLGELKGVTDPEEKRKIIGREFIRSFEDAVRQIVDEQGAAEGKQPEVEFLVQGTLYPDVVESGGGTGTANIKSHHNVGGLPEDLEFELVEPLRLLFKDEVRAVGRELGLPEEIVARQPFPGPGLAIRIIGEVTADRLATLRQADAIAREELTAAGLDRQIWQCPVVLLADVRSVGVQGDGRTYGHPIVLRPVSSEDAMTADWTRLPYEVLERISTRITNEVAEVNRVVLDVTSKPPGTIEWE.

Positions 7–196 (PVLVVDFGAQ…LHELAGIPAS (190 aa)) constitute a Glutamine amidotransferase type-1 domain. Cysteine 84 serves as the catalytic Nucleophile. Active-site residues include histidine 170 and glutamate 172. A GMPS ATP-PPase domain is found at 197-398 (WTPSNIADVL…LGLPEEIVAR (202 aa)). 224-230 (SGGVDSA) serves as a coordination point for ATP.

Homodimer.

The catalysed reaction is XMP + L-glutamine + ATP + H2O = GMP + L-glutamate + AMP + diphosphate + 2 H(+). It functions in the pathway purine metabolism; GMP biosynthesis; GMP from XMP (L-Gln route): step 1/1. Catalyzes the synthesis of GMP from XMP. This Nocardia farcinica (strain IFM 10152) protein is GMP synthase [glutamine-hydrolyzing].